A 54-amino-acid polypeptide reads, in one-letter code: Lectin alpha chain (54 aa).

The protein belongs to the leguminous lectin family. Tetramer of two alpha and two beta chains.

This Lathyrus odoratus (Sweet pea) protein is Lectin alpha chain.